Reading from the N-terminus, the 418-residue chain is Putative methylthiotransferase jhp_0270 (418 aa).

The region spanning 2–110 is the MTTase N-terminal domain; that stretch reads KKVYFKTFGC…INALLQEKKR (109 aa). Positions 11, 45, 74, 144, 148, and 151 each coordinate [4Fe-4S] cluster. The Radical SAM core domain maps to 130-355; that stretch reads FVGKTRAFIK…KDLIFHKNKA (226 aa).

This sequence belongs to the methylthiotransferase family. [4Fe-4S] cluster is required as a cofactor.

The protein is Putative methylthiotransferase jhp_0270 of Helicobacter pylori (strain J99 / ATCC 700824) (Campylobacter pylori J99).